The following is an 884-amino-acid chain: Coatomer subunit gamma-1 (884 aa).

HEAT repeat units lie at residues 65–100 (VEATEVFFAVTKLFQSKDAGLRRLVYLMIKELSPSS), 101–138 (DEVIIVTSSLMKDMNSKTDMYRANAIRVLCRIIDGTLL), 286–323 (RELAPAITVLQLFLSSSKPVLRFAAVRTLNKVAMTRPL), 325–357 (VTNCNVDLESLMSDQNRSIATLAITTLLKTGNE), and 358–395 (SSVDRLMKQITNFMSDIADEFKIVVVEAIRSLCLKFPL). The interval 592–612 (QPLQEKKAPGKKPPAGAPAPA) is disordered. The span at 602-612 (KKPPAGAPAPA) shows a compositional bias: pro residues.

Belongs to the COPG family. Oligomeric complex that consists of at least the alpha, beta, beta', gamma, delta, epsilon and zeta subunits.

The protein localises to the cytoplasm. It localises to the golgi apparatus membrane. It is found in the cytoplasmic vesicle. The protein resides in the COPI-coated vesicle membrane. Functionally, the coatomer is a cytosolic protein complex that binds to dilysine motifs and reversibly associates with Golgi non-clathrin-coated vesicles, which further mediate biosynthetic protein transport from the ER, via the Golgi up to the trans Golgi network. Coatomer complex is required for budding from Golgi membranes, and is essential for the retrograde Golgi-to-ER transport of dilysine-tagged proteins. In Oryza sativa subsp. japonica (Rice), this protein is Coatomer subunit gamma-1.